Consider the following 96-residue polypeptide: Co-chaperonin GroES 2 (96 aa).

Belongs to the GroES chaperonin family. In terms of assembly, heptamer of 7 subunits arranged in a ring. Interacts with the chaperonin GroEL.

It is found in the cytoplasm. In terms of biological role, together with the chaperonin GroEL, plays an essential role in assisting protein folding. The GroEL-GroES system forms a nano-cage that allows encapsulation of the non-native substrate proteins and provides a physical environment optimized to promote and accelerate protein folding. GroES binds to the apical surface of the GroEL ring, thereby capping the opening of the GroEL channel. This chain is Co-chaperonin GroES 2, found in Vibrio parahaemolyticus serotype O3:K6 (strain RIMD 2210633).